Reading from the N-terminus, the 657-residue chain is 1-deoxy-D-xylulose-5-phosphate synthase (657 aa).

Residues His-73 and 113 to 115 (SHA) contribute to the thiamine diphosphate site. Residue Asp-145 participates in Mg(2+) binding. Residues 146 to 147 (GA), Asn-175, Tyr-293, and Glu-375 each bind thiamine diphosphate. Asn-175 lines the Mg(2+) pocket.

The protein belongs to the transketolase family. DXPS subfamily. As to quaternary structure, homodimer. It depends on Mg(2+) as a cofactor. The cofactor is thiamine diphosphate.

It catalyses the reaction D-glyceraldehyde 3-phosphate + pyruvate + H(+) = 1-deoxy-D-xylulose 5-phosphate + CO2. Its pathway is metabolic intermediate biosynthesis; 1-deoxy-D-xylulose 5-phosphate biosynthesis; 1-deoxy-D-xylulose 5-phosphate from D-glyceraldehyde 3-phosphate and pyruvate: step 1/1. In terms of biological role, catalyzes the acyloin condensation reaction between C atoms 2 and 3 of pyruvate and glyceraldehyde 3-phosphate to yield 1-deoxy-D-xylulose-5-phosphate (DXP). The polypeptide is 1-deoxy-D-xylulose-5-phosphate synthase (Pseudarthrobacter chlorophenolicus (strain ATCC 700700 / DSM 12829 / CIP 107037 / JCM 12360 / KCTC 9906 / NCIMB 13794 / A6) (Arthrobacter chlorophenolicus)).